The chain runs to 447 residues: Tektin-4 (447 aa).

Coiled-coil stretches lie at residues 114-143 (KSEL…RALD), 324-348 (KILS…DKEA), and 375-423 (FRLM…TNSL).

Belongs to the tektin family. In terms of assembly, microtubule inner protein component of sperm flagellar doublet microtubules. In terms of processing, ubiquitinated, leading to its degradation. Deubiquitinated by USP16, promoting its stability.

The protein localises to the cytoplasm. Its subcellular location is the cytoskeleton. It is found in the cilium axoneme. It localises to the flagellum axoneme. Functionally, microtubule inner protein (MIP) part of the dynein-decorated doublet microtubules (DMTs) in cilia and flagellar axoneme. Forms filamentous polymers in the walls of ciliary and flagellar microtubules. Contributes to normal sperm motility. This chain is Tektin-4 (Tekt4), found in Rattus norvegicus (Rat).